The sequence spans 558 residues: Dihydroxy-acid dehydratase (558 aa).

D78 lines the Mg(2+) pocket. C119 is a [2Fe-2S] cluster binding site. D120 and K121 together coordinate Mg(2+). K121 carries the N6-carboxylysine modification. C192 is a [2Fe-2S] cluster binding site. E445 contributes to the Mg(2+) binding site. The active-site Proton acceptor is S471.

It belongs to the IlvD/Edd family. In terms of assembly, homodimer. The cofactor is [2Fe-2S] cluster. Mg(2+) serves as cofactor.

It catalyses the reaction (2R)-2,3-dihydroxy-3-methylbutanoate = 3-methyl-2-oxobutanoate + H2O. The enzyme catalyses (2R,3R)-2,3-dihydroxy-3-methylpentanoate = (S)-3-methyl-2-oxopentanoate + H2O. The protein operates within amino-acid biosynthesis; L-isoleucine biosynthesis; L-isoleucine from 2-oxobutanoate: step 3/4. It functions in the pathway amino-acid biosynthesis; L-valine biosynthesis; L-valine from pyruvate: step 3/4. Functionally, functions in the biosynthesis of branched-chain amino acids. Catalyzes the dehydration of (2R,3R)-2,3-dihydroxy-3-methylpentanoate (2,3-dihydroxy-3-methylvalerate) into 2-oxo-3-methylpentanoate (2-oxo-3-methylvalerate) and of (2R)-2,3-dihydroxy-3-methylbutanoate (2,3-dihydroxyisovalerate) into 2-oxo-3-methylbutanoate (2-oxoisovalerate), the penultimate precursor to L-isoleucine and L-valine, respectively. This Akkermansia muciniphila (strain ATCC BAA-835 / DSM 22959 / JCM 33894 / BCRC 81048 / CCUG 64013 / CIP 107961 / Muc) protein is Dihydroxy-acid dehydratase.